The following is a 379-amino-acid chain: Diaminopimelate decarboxylase (379 aa).

Lys-48 bears the N6-(pyridoxal phosphate)lysine mark. Pyridoxal 5'-phosphate contacts are provided by residues Gly-214 and 242 to 245 (EPGR). Residues Arg-245, Arg-280, and Tyr-284 each coordinate substrate. Cys-309 acts as the Proton donor in catalysis. Glu-310 and Tyr-338 together coordinate substrate. Tyr-338 contributes to the pyridoxal 5'-phosphate binding site.

This sequence belongs to the Orn/Lys/Arg decarboxylase class-II family. LysA subfamily. As to quaternary structure, homodimer. Pyridoxal 5'-phosphate serves as cofactor.

The catalysed reaction is meso-2,6-diaminopimelate + H(+) = L-lysine + CO2. Its pathway is amino-acid biosynthesis; L-lysine biosynthesis via DAP pathway; L-lysine from DL-2,6-diaminopimelate: step 1/1. Specifically catalyzes the decarboxylation of meso-diaminopimelate (meso-DAP) to L-lysine. The protein is Diaminopimelate decarboxylase of Deinococcus radiodurans (strain ATCC 13939 / DSM 20539 / JCM 16871 / CCUG 27074 / LMG 4051 / NBRC 15346 / NCIMB 9279 / VKM B-1422 / R1).